Reading from the N-terminus, the 1634-residue chain is Phosphatidylinositol 4-phosphate 3-kinase C2 domain-containing subunit beta (1634 aa).

Positions 2–298 (SSTQGNGEHW…YASRYGNRKN (297 aa)) are interaction with GRB2. Disordered stretches follow at residues 45–188 (EENR…QPSD) and 259–315 (GRGP…VGSR). Polar residues predominate over residues 87-112 (SDPTLNYNSLSPQEGPPNHSTSQGPQ). Residues 176 to 187 (GSPSSSKISQPS) are compositionally biased toward low complexity. The span at 259-270 (GRGPLDFSKDTS) shows a compositional bias: basic and acidic residues. The PI3K-RBD domain occupies 375-463 (EVNLKVTVLC…DIDIRLQLME (89 aa)). One can recognise a C2 PI3K-type domain in the interval 635-786 (VYATHRIPII…DSVILQIDFP (152 aa)). Residues 805–981 (RYEFGSLREE…QYLLAALLCC (177 aa)) enclose the PIK helical domain. Residues 1050–1328 (VPRDCSYFNS…LIESSLGSVA (279 aa)) enclose the PI3K/PI4K catalytic domain. The segment at 1056-1062 (YFNSNAV) is G-loop. The tract at residues 1192 to 1200 (GICDRHNDN) is catalytic loop. An activation loop region spans residues 1211–1237 (HIDFGRFLGHAQMFGNIKRDRAPFVFT). The PX domain maps to 1365–1481 (GRISDVFLCR…TFFHPLPRDE (117 aa)). A C2 domain is found at 1504 to 1624 (VGGEVKLSIS…DLAQEKTGWF (121 aa)).

The protein belongs to the PI3/PI4-kinase family. As to quaternary structure, part of a complex with ERBB2 and EGFR. Part of a complex with phosphorylated EGFR and GRB2. Interacts with phosphorylated EGFR and PDGFR, maybe indirectly. Interacts with GRB2. The cofactor is Ca(2+). Mg(2+) is required as a cofactor. It depends on Mn(2+) as a cofactor. Expressed in columnar and transitional epithelia, mononuclear cells, and ganglion cells (at protein level). Widely expressed, with highest levels in thymus and placenta and lowest in peripheral blood, skeletal muscle and kidney.

The protein resides in the microsome. It is found in the cell membrane. It localises to the cytoplasm. Its subcellular location is the cytosol. The protein localises to the nucleus. The protein resides in the endoplasmic reticulum. The enzyme catalyses a 1,2-diacyl-sn-glycero-3-phospho-(1D-myo-inositol 4-phosphate) + ATP = a 1,2-diacyl-sn-glycero-3-phospho-(1D-myo-inositol-3,4-bisphosphate) + ADP + H(+). It catalyses the reaction a 1,2-diacyl-sn-glycero-3-phospho-(1D-myo-inositol) + ATP = a 1,2-diacyl-sn-glycero-3-phospho-(1D-myo-inositol-3-phosphate) + ADP + H(+). Its activity is regulated as follows. Activated by GRB2. Phosphorylates PtdIns and PtdIns4P with a preference for PtdIns. Does not phosphorylate PtdIns(4,5)P2. May be involved in EGF and PDGF signaling cascades. The sequence is that of Phosphatidylinositol 4-phosphate 3-kinase C2 domain-containing subunit beta (PIK3C2B) from Homo sapiens (Human).